The primary structure comprises 434 residues: Ataxin-10 homolog (434 aa).

It belongs to the ataxin-10 family.

It is found in the cytoplasm. The protein resides in the nucleus. Functionally, may play a role in the regulation of cytokinesis. The chain is Ataxin-10 homolog (mug160) from Schizosaccharomyces pombe (strain 972 / ATCC 24843) (Fission yeast).